The following is a 525-amino-acid chain: Lymphocyte activation gene 3 protein (525 aa).

The first 23 residues, 1–23 (MRQDLFLDLLLLQLLWEAPVVSS), serve as a signal peptide directing secretion. Over 24–442 (GPGKELSVVW…ISGDLKGGHL (419 aa)) the chain is Extracellular. The Ig-like V-type domain maps to 37–163 (GAPVHLPCSL…FSCSLRLRVG (127 aa)). Residues 37 to 246 (GAPVHLPCSL…LTYRDGFNVS (210 aa)) are interaction with FGL1. A disulfide bridge links Cys44 with Cys156. Ig-like C2-type domains follow at residues 164-246 (QASM…FNVS), 258-341 (PVAP…AAVT), and 345-412 (ITVT…EGQK). Asn184 carries N-linked (GlcNAc...) asparagine glycosylation. Cys185 and Cys235 form a disulfide bridge. Asn244 and Asn309 each carry an N-linked (GlcNAc...) asparagine glycan. Cystine bridges form between Cys276/Cys327 and Cys363/Cys405. Residues 422–442 (ESSSGAWSAKRISGDLKGGHL) form a connecting peptide region. Residues 443–463 (FLSLILGALALFLLVTGAFGF) form a helical membrane-spanning segment. Residues 464 to 525 (HLWRRQLLRR…PELEPESRQL (62 aa)) lie on the Cytoplasmic side of the membrane. The disordered stretch occupies residues 486–525 (PVQSKIEELEREPETEMEPETEPDPEPQPEPELEPESRQL). The short motif at 490–495 (KIEELE) is the KIEELE motif element. Residues 490 to 499 (KIEELEREPE) show a composition bias toward basic and acidic residues. The 15 X 2 AA tandem repeats of E-X stretch occupies residues 493-522 (ELEREPETEMEPETEPDPEPQPEPELEPES). The span at 500–519 (TEMEPETEPDPEPQPEPELE) shows a compositional bias: acidic residues.

It belongs to the LAG3 family. Interacts with MHC class II (MHC-II); selectively recognizes stable complexes of peptide and MHC-II. Interacts with FGL1 (via the Fibrinogen C-terminal domain). Post-translationally, proteolytically cleaved by ADAM10 and ADAM17 within the connecting peptide region, leading to release of Secreted lymphocyte activation gene 3 protein (sLAG-3). ADAM10 mediates constitutive cleavage, but cleavage increases following T-cell activation, whereas shedding by ADAM17 is induced by TCR signaling in a PRKCQ-dependent manner.

It localises to the cell membrane. Its subcellular location is the secreted. In terms of biological role, lymphocyte activation gene 3 protein: Inhibitory receptor on antigen activated T-cells. Delivers inhibitory signals upon binding to ligands, such as FGL1. FGL1 constitutes a major ligand of LAG3 and is responsible for LAG3 T-cell inhibitory function. Following TCR engagement, LAG3 associates with CD3-TCR in the immunological synapse and directly inhibits T-cell activation. May inhibit antigen-specific T-cell activation in synergy with PDCD1/PD-1, possibly by acting as a coreceptor for PDCD1/PD-1. Negatively regulates the proliferation, activation, effector function and homeostasis of both CD8(+) and CD4(+) T-cells. Also mediates immune tolerance: constitutively expressed on a subset of regulatory T-cells (Tregs) and contributes to their suppressive function. Also acts as a negative regulator of plasmacytoid dendritic cell (pDCs) activation. Binds MHC class II (MHC-II); the precise role of MHC-II-binding is however unclear. Its function is as follows. May function as a ligand for MHC class II (MHC-II) on antigen-presenting cells (APC), promoting APC activation/maturation and driving Th1 immune response. The polypeptide is Lymphocyte activation gene 3 protein (Lag3) (Rattus norvegicus (Rat)).